We begin with the raw amino-acid sequence, 167 residues long: NADH-quinone oxidoreductase subunit B 2 (167 aa).

Cysteine 39, cysteine 40, cysteine 104, and cysteine 134 together coordinate [4Fe-4S] cluster.

This sequence belongs to the complex I 20 kDa subunit family. NDH-1 is composed of 14 different subunits. Subunits NuoB, C, D, E, F, and G constitute the peripheral sector of the complex. It depends on [4Fe-4S] cluster as a cofactor.

The protein localises to the cell inner membrane. It carries out the reaction a quinone + NADH + 5 H(+)(in) = a quinol + NAD(+) + 4 H(+)(out). Its function is as follows. NDH-1 shuttles electrons from NADH, via FMN and iron-sulfur (Fe-S) centers, to quinones in the respiratory chain. Couples the redox reaction to proton translocation (for every two electrons transferred, four hydrogen ions are translocated across the cytoplasmic membrane), and thus conserves the redox energy in a proton gradient. The polypeptide is NADH-quinone oxidoreductase subunit B 2 (Burkholderia mallei (strain NCTC 10247)).